Consider the following 407-residue polypeptide: Phosphopentomutase (407 aa).

Mn(2+) is bound by residues D10, D306, H311, D347, H348, and H359.

It belongs to the phosphopentomutase family. Mn(2+) is required as a cofactor.

It is found in the cytoplasm. The enzyme catalyses 2-deoxy-alpha-D-ribose 1-phosphate = 2-deoxy-D-ribose 5-phosphate. It catalyses the reaction alpha-D-ribose 1-phosphate = D-ribose 5-phosphate. It participates in carbohydrate degradation; 2-deoxy-D-ribose 1-phosphate degradation; D-glyceraldehyde 3-phosphate and acetaldehyde from 2-deoxy-alpha-D-ribose 1-phosphate: step 1/2. In terms of biological role, isomerase that catalyzes the conversion of deoxy-ribose 1-phosphate (dRib-1-P) and ribose 1-phosphate (Rib-1-P) to deoxy-ribose 5-phosphate (dRib-5-P) and ribose 5-phosphate (Rib-5-P), respectively. The polypeptide is Phosphopentomutase (Salmonella paratyphi C (strain RKS4594)).